The sequence spans 782 residues: Endonuclease MutS2 (782 aa).

Gly-336 to Thr-343 contacts ATP. The Smr domain occupies Leu-707–Lys-782.

Belongs to the DNA mismatch repair MutS family. MutS2 subfamily. Homodimer. Binds to stalled ribosomes, contacting rRNA.

Its function is as follows. Endonuclease that is involved in the suppression of homologous recombination and thus may have a key role in the control of bacterial genetic diversity. Acts as a ribosome collision sensor, splitting the ribosome into its 2 subunits. Detects stalled/collided 70S ribosomes which it binds and splits by an ATP-hydrolysis driven conformational change. Acts upstream of the ribosome quality control system (RQC), a ribosome-associated complex that mediates the extraction of incompletely synthesized nascent chains from stalled ribosomes and their subsequent degradation. Probably generates substrates for RQC. This chain is Endonuclease MutS2, found in Staphylococcus epidermidis (strain ATCC 35984 / DSM 28319 / BCRC 17069 / CCUG 31568 / BM 3577 / RP62A).